Here is a 772-residue protein sequence, read N- to C-terminus: Chondroitin sulfate glucuronyltransferase (772 aa).

Residues 1–6 (MRLSSL) are Cytoplasmic-facing. The chain crosses the membrane as a helical; Signal-anchor for type II membrane protein span at residues 7–29 (LALLRPALPLILGLSLGCSLSLL). The Lumenal segment spans residues 30–772 (RVSWIQGEGE…LFEQEQANST (743 aa)). N-linked (GlcNAc...) asparagine glycans are attached at residues Asn-121 and Asn-342. The segment at 629–662 (ALSPQRSPPGPPGAGPDPPSPPGADPSRGAPIGG) is disordered. The segment covering 634–652 (RSPPGPPGAGPDPPSPPGA) has biased composition (pro residues).

Belongs to the chondroitin N-acetylgalactosaminyltransferase family. In terms of tissue distribution, ubiquitous. Highly expressed in placenta, small intestine and pancreas.

It is found in the golgi apparatus. Its subcellular location is the golgi stack membrane. It catalyses the reaction 3-O-(beta-D-GalNAc-(1-&gt;4)-beta-D-GlcA-(1-&gt;3)-beta-D-Gal-(1-&gt;3)-beta-D-Gal-(1-&gt;4)-beta-D-Xyl)-L-seryl-[protein] + UDP-alpha-D-glucuronate = 3-O-(beta-D-GlcA-(1-&gt;3)-beta-D-GalNAc-(1-&gt;4)-beta-D-GlcA-(1-&gt;3)-beta-D-Gal-(1-&gt;3)-beta-D-Gal-(1-&gt;4)-beta-D-Xyl)-L-seryl-[protein] + UDP + H(+). The catalysed reaction is 3-O-{[beta-D-GalNAc-(1-&gt;4)-beta-D-GlcA-(1-&gt;3)](n)-beta-D-GalNAc-(1-&gt;4)-beta-D-GlcA-(1-&gt;3)-beta-D-Gal-(1-&gt;3)-beta-D-Gal-(1-&gt;4)-beta-D-Xyl}-L-seryl-[protein] + UDP-alpha-D-glucuronate = 3-O-{beta-D-GlcA-(1-&gt;3)-[beta-D-GalNAc-(1-&gt;4)-beta-D-GlcA-(1-&gt;3)](n)-beta-D-GalNAc-(1-&gt;4)-beta-D-GlcA-(1-&gt;3)-beta-D-Gal-(1-&gt;3)-beta-D-Gal-(1-&gt;4)-beta-D-Xyl}-L-seryl-[protein] + UDP + H(+). Functionally, transfers glucuronic acid (GlcUA) from UDP-GlcUA to N-acetylgalactosamine residues on the non-reducing end of the elongating chondroitin polymer. Has no N-acetylgalactosaminyltransferase activity. This Homo sapiens (Human) protein is Chondroitin sulfate glucuronyltransferase (CHPF2).